Here is a 780-residue protein sequence, read N- to C-terminus: Pendrin (780 aa).

The Cytoplasmic segment spans residues 1-87 (MAARDRRSEP…YRVKEWLLSD (87 aa)). A helical membrane pass occupies residues 88-108 (IISGVSTGLVGTLQGMAYALL). Position 109 (alanine 109) is a topological domain, extracellular. A helical membrane pass occupies residues 110-130 (AVPVQYGLYSAFFPILTYFVF). The Cytoplasmic portion of the chain corresponds to 131–135 (GTSRH). Residues 136–156 (ISVGPFPVVSLMVGSVVLSMA) traverse the membrane as a helical segment. The Extracellular segment spans residues 157–191 (PDDHFLVPSGNGSTLNTTTLDTGTRDAARVLLAST). The chain crosses the membrane as a helical span at residues 192-212 (LTLLVGIIQLVFGGLQIGFIV). Residues 213–218 (RYLADP) lie on the Cytoplasmic side of the membrane. Residues 219 to 239 (LVGGFTTAAAFQVLVSQLKIV) traverse the membrane as a helical segment. Residues 240–263 (LNVSTKNYNGVLSIIYTLIEIFQN) are Extracellular-facing. A helical transmembrane segment spans residues 264-284 (IGDTNIADFIAGLLTIIVCMA). Residues 285 to 295 (VKELNDRFKHK) are Cytoplasmic-facing. The chain crosses the membrane as a helical span at residues 296–316 (IPVPIPIEVIVTIIATAISYG). Residues 317-344 (ANLEANYNAGIVKSIPSGFLPPVLPSVG) are Extracellular-facing. The helical transmembrane segment at 345–365 (LFSDMLAASFSIAVVAYAIAV) threads the bilayer. The Cytoplasmic portion of the chain corresponds to 366–384 (SVGKVYATKHDYIIDGNQE). Residues 385–405 (FIAFGISNVFSGFFSCFVATT) traverse the membrane as a helical segment. At 406-421 (ALSRTAVQESTGGKTQ) the chain is on the extracellular side. A helical transmembrane segment spans residues 422–442 (VAGLISAVIVMVAIVALGKLL). Residues 443 to 448 (EPLQKS) are Cytoplasmic-facing. Residues 449 to 469 (VLAAVVIANLKGMFMQVCDVP) traverse the membrane as a helical segment. Residues 470 to 486 (RLWKQNKTDAVIWVFTC) are Extracellular-facing. A helical membrane pass occupies residues 487 to 507 (IMSIILGLDLGLLAGLLFGLL). Topologically, residues 508 to 780 (TVVLRVQFPS…QDEAMRRLAS (273 aa)) are cytoplasmic. Residues 535–729 (HYKNLEEPEG…LTVHDAILYL (195 aa)) enclose the STAS domain.

This sequence belongs to the SLC26A/SulP transporter (TC 2.A.53) family. As to expression, highly expressed in the kidney (at protein level).

It localises to the cell membrane. The protein localises to the apical cell membrane. The enzyme catalyses chloride(in) = chloride(out). The catalysed reaction is iodide(out) = iodide(in). It carries out the reaction hydrogencarbonate(in) + chloride(out) = hydrogencarbonate(out) + chloride(in). It catalyses the reaction iodide(in) + hydrogencarbonate(out) = iodide(out) + hydrogencarbonate(in). The enzyme catalyses iodide(in) + chloride(out) = iodide(out) + chloride(in). The catalysed reaction is formate(in) + chloride(out) = formate(out) + chloride(in). Its function is as follows. Sodium-independent transporter of chloride and iodide. Mediates electroneutral chloride-bicarbonate and chloride-formate exchange with 1:1 stoichiometry. Mediates electroneutral iodide-chloride and iodide-bicarbonate exchange. The chain is Pendrin (Slc26a4) from Rattus norvegicus (Rat).